The sequence spans 745 residues: 5-methyltetrahydropteroyltriglutamate--homocysteine methyltransferase (745 aa).

5-methyltetrahydropteroyltri-L-glutamate contacts are provided by residues Arg17–Lys20 and Lys111. L-homocysteine contacts are provided by residues Ile421–Ser423 and Glu474. Residues Ile421 to Ser423 and Glu474 contribute to the L-methionine site. 5-methyltetrahydropteroyltri-L-glutamate-binding positions include Arg505–Cys506 and Trp551. Asp589 contacts L-homocysteine. Residue Asp589 participates in L-methionine binding. 5-methyltetrahydropteroyltri-L-glutamate is bound at residue Glu595. Positions 631, 633, and 655 each coordinate Zn(2+). His684 (proton donor) is an active-site residue. Position 716 (Cys716) interacts with Zn(2+).

The protein belongs to the vitamin-B12 independent methionine synthase family. Zn(2+) serves as cofactor.

The catalysed reaction is 5-methyltetrahydropteroyltri-L-glutamate + L-homocysteine = tetrahydropteroyltri-L-glutamate + L-methionine. Its pathway is amino-acid biosynthesis; L-methionine biosynthesis via de novo pathway; L-methionine from L-homocysteine (MetE route): step 1/1. Functionally, catalyzes the transfer of a methyl group from 5-methyltetrahydrofolate to homocysteine resulting in methionine formation. In Thermodesulfovibrio yellowstonii (strain ATCC 51303 / DSM 11347 / YP87), this protein is 5-methyltetrahydropteroyltriglutamate--homocysteine methyltransferase.